The chain runs to 271 residues: MAFKFKTFAAVGALIGSLALVGCGQDEKDPNHIKVGVIVGAEQQVAEVAQKVAKDKYGLDVELVTFNDYVLPNEALSKGDIDANAFQHKPYLDQQLKDRGYKLVAVGNTFVYPIAGYSKKIKSLDELQDGSQVAVPNDPTNLGRSLLLLQKVGLIKLKDGVGLLPTVLDVVENPKNLKIVELEAPQLPRSLDDAQIALAVINTTYASQIGLTPAKDGIFVEDKESPYVNLIVTREDNKDAENVKKFVQAYQSDEVYEAANKVFNGGAVKGW.

Positions 1–22 (MAFKFKTFAAVGALIGSLALVG) are cleaved as a signal peptide. The N-palmitoyl cysteine moiety is linked to residue Cys-23. Cys-23 carries S-diacylglycerol cysteine lipidation.

Belongs to the NlpA lipoprotein family.

The protein resides in the cell membrane. This protein is a component of a D-methionine permease, a binding protein-dependent, ATP-driven transport system. The polypeptide is D-methionine-binding lipoprotein MetQ (metQ) (Escherichia coli (strain K12)).